Reading from the N-terminus, the 254-residue chain is MWLRCPHCHQLLFAKQLTQYAVCPNCDYGLRIPARHRLSWLVDSFKEFDKDLQTKNPLHFPGYQEKISKLQRQTKLNDSVLTGEASINDQLFSLGIMDPTFIMGSLGTVTGEKITRLFEYATTHRQAVVLFTASGGARMQEGIMSLMQMAKVSQAINEHAAAGLLYIVVLTDPTTGGVTASFAMDGDIILAEPHALVGFAGRRVIEQTIHQQIPIDLQSAENILHHGFIDRIVKRQDEKKLLEWLLKTGSVANE.

The CoA carboxyltransferase N-terminal domain maps to 1-254 (MWLRCPHCHQ…LLKTGSVANE (254 aa)). Residues cysteine 5, cysteine 8, cysteine 23, and cysteine 26 each coordinate Zn(2+). The C4-type zinc-finger motif lies at 5 to 26 (CPHCHQLLFAKQLTQYAVCPNC).

It belongs to the AccD/PCCB family. In terms of assembly, acetyl-CoA carboxylase is a heterohexamer composed of biotin carboxyl carrier protein (AccB), biotin carboxylase (AccC) and two subunits each of ACCase subunit alpha (AccA) and ACCase subunit beta (AccD). Zn(2+) is required as a cofactor.

The protein resides in the cytoplasm. It carries out the reaction N(6)-carboxybiotinyl-L-lysyl-[protein] + acetyl-CoA = N(6)-biotinyl-L-lysyl-[protein] + malonyl-CoA. The protein operates within lipid metabolism; malonyl-CoA biosynthesis; malonyl-CoA from acetyl-CoA: step 1/1. In terms of biological role, component of the acetyl coenzyme A carboxylase (ACC) complex. Biotin carboxylase (BC) catalyzes the carboxylation of biotin on its carrier protein (BCCP) and then the CO(2) group is transferred by the transcarboxylase to acetyl-CoA to form malonyl-CoA. The protein is Acetyl-coenzyme A carboxylase carboxyl transferase subunit beta of Limosilactobacillus reuteri (strain DSM 20016) (Lactobacillus reuteri).